A 339-amino-acid polypeptide reads, in one-letter code: MHIKRSIEKIPGGMMLVPLFLGALCHTFAPGAGKYFGSFTNGLISGTVPILAVWFFCMGASIRLSATGTVLRKSGTLVVTKIAVAWVVAAVASRILPENGVEVGFFAGLSTLALVAAMDMTNGGLYASIMQQYGTKEESGAFVLMSLESGPLMTMVILGTAGIASFEPHVFVGAVLPFLVGFALGNLDPELRDFFSRAVQTLIPFFAFALGNTIDLSVIGQTGLLGVLLGISVIIITGIPLIVADKVLGGGDGTAGIAASSSAGAAVATPVLIAEMVPAFKPVAPAATTLVATSVIVTSVLVPIITAMWSKRVKGGDGTVPKEDAVEEKAEQQRRRIIK.

10 consecutive transmembrane segments (helical) span residues 10–30, 42–62, 77–97, 100–120, 141–161, 163–183, 199–219, 224–244, 254–274, and 289–309; these read IPGG…TFAP, GLIS…GASI, LVVT…RILP, GVEV…AMDM, AFVL…LGTA, IASF…VGFA, VQTL…LSVI, LLGV…LIVA, TAGI…VLIA, and TLVA…TAMW. The tract at residues 315-339 is disordered; that stretch reads GGDGTVPKEDAVEEKAEQQRRRIIK. A compositionally biased stretch (basic and acidic residues) spans 320-339; the sequence is VPKEDAVEEKAEQQRRRIIK.

It belongs to the KdgT transporter family.

The protein resides in the cell inner membrane. The enzyme catalyses 2-dehydro-3-deoxy-D-gluconate(in) + H(+)(in) = 2-dehydro-3-deoxy-D-gluconate(out) + H(+)(out). Its activity is regulated as follows. Uptake is inhibited by the protonophore uncouplers carbonyl cyanide m-chlorophenylhydrazone (CCCP) and 2,4-dinitrophenol, and by NaN(3). Its function is as follows. Catalyzes the proton-dependent uptake of 2-keto-3-deoxygluconate (KDG) into the cell. Can also mediate the uptake of glucuronate with a low affinity, and may mediate the uptake of 5-keto-4-deoxyuronate (DKI) and 2,5-diketo-3-deoxygluconate (DKII), which are intermediates in pectin degradation. This is 2-keto-3-deoxygluconate permease from Dickeya chrysanthemi (Pectobacterium chrysanthemi).